The chain runs to 825 residues: Glycerol-3-phosphate acyltransferase (825 aa).

The HXXXXD motif signature appears at 306-311; that stretch reads CHRSHM. A disordered region spans residues 802–825; that stretch reads SASSSTEMEASTSSSQTAEETTQG.

The protein belongs to the GPAT/DAPAT family.

Its subcellular location is the cell inner membrane. It catalyses the reaction sn-glycerol 3-phosphate + an acyl-CoA = a 1-acyl-sn-glycero-3-phosphate + CoA. It participates in phospholipid metabolism; CDP-diacylglycerol biosynthesis; CDP-diacylglycerol from sn-glycerol 3-phosphate: step 1/3. The protein is Glycerol-3-phosphate acyltransferase of Pectobacterium atrosepticum (strain SCRI 1043 / ATCC BAA-672) (Erwinia carotovora subsp. atroseptica).